A 212-amino-acid chain; its full sequence is Ferric nitrobindin-like protein (212 aa).

The span at 1-11 (MTSSDQPERGS) shows a compositional bias: basic and acidic residues. Residues 1-36 (MTSSDQPERGSGDAAVQAAAERAEQTRGRNVPQFDD) form a disordered region. The GXWXGXG signature appears at 64–70 (GVWRGDG).

Belongs to the nitrobindin family.

The sequence is that of Ferric nitrobindin-like protein from Saccharopolyspora erythraea (strain ATCC 11635 / DSM 40517 / JCM 4748 / NBRC 13426 / NCIMB 8594 / NRRL 2338).